The sequence spans 488 residues: Ergochrome gene cluster transcriptional regulator CPUR_05433 (488 aa).

Residues 1–29 form a disordered region; sequence MDHSIGGRNCQSGGTTASAPRSTGSDEFP. Polar residues predominate over residues 9–25; it reads NCQSGGTTASAPRSTGS. A DNA-binding region (zn(2)-C6 fungal-type) is located at residues 36–63; sequence CHACSLSKVRCSKEKPSCSRCAKRGVPC.

It localises to the nucleus. Functionally, transcription factor; part of the gene cluster responsible for the typical purple-black color of the ergot sclerotia. The ergochrome gene cluster produces several ergot pigments including the yellow ergochrome secalonic acid and its derivatives, as well as the red anthraquinones endocrocin and clavorubin. The polypeptide is Ergochrome gene cluster transcriptional regulator CPUR_05433 (Claviceps purpurea (strain 20.1) (Ergot fungus)).